A 1023-amino-acid chain; its full sequence is Sodium/potassium-transporting ATPase subunit alpha-1 (1023 aa).

A propeptide spanning residues methionine 1 to valine 5 is cleaved from the precursor. The segment covering methionine 1–glutamate 11 has biased composition (basic and acidic residues). Positions methionine 1–glutamate 38 are disordered. The Cytoplasmic portion of the chain corresponds to glycine 6–proline 87. Residue lysine 9 is modified to N6-acetyllysine. At tyrosine 10 the chain carries Phosphotyrosine. Residue serine 16 is modified to Phosphoserine; by PKC. An N6-acetyllysine modification is found at lysine 21. Serine 23 is modified (phosphoserine; by PKC). A compositionally biased stretch (basic and acidic residues) spans lysine 28–glutamate 38. 2 positions are modified to phosphoserine: serine 40 and serine 47. The interval proline 82–proline 84 is phosphoinositide-3 kinase binding. Residues glutamate 88 to alanine 108 form a helical membrane-spanning segment. Residues isoleucine 109 to tyrosine 131 are Extracellular-facing. A helical membrane pass occupies residues leucine 132–alanine 152. Residues lysine 153–isoleucine 288 lie on the Cytoplasmic side of the membrane. Residues serine 216–asparagine 235 are disordered. Serine 228 carries the phosphoserine modification. Tyrosine 260 is modified (phosphotyrosine). The helical transmembrane segment at glutamate 289–isoleucine 308 threads the bilayer. The Extracellular segment spans residues leucine 309–alanine 320. A helical membrane pass occupies residues valine 321–alanine 338. At threonine 339–leucine 772 the chain is on the cytoplasmic side. Aspartate 376 (4-aspartylphosphate intermediate) is an active-site residue. Serine 452 and serine 484 each carry phosphoserine. Lysine 487 serves as a coordination point for ATP. A Phosphotyrosine modification is found at tyrosine 542. Positions arginine 596–aspartate 717 are mediates interaction with SCN7A. Lysine 661 is subject to N6-succinyllysine. Residues serine 668 and serine 675 each carry the phosphoserine modification. Positions 717 and 721 each coordinate Mg(2+). Residues lysine 773 to isoleucine 792 form a helical membrane-spanning segment. The Extracellular segment spans residues phenylalanine 793–leucine 802. A helical transmembrane segment spans residues glycine 803 to alanine 823. The Cytoplasmic segment spans residues tyrosine 824–lysine 843. The chain crosses the membrane as a helical span at residues leucine 844–phenylalanine 866. The Extracellular portion of the chain corresponds to phenylalanine 867–cysteine 918. The chain crosses the membrane as a helical span at residues histidine 919–lysine 938. Residues threonine 939–asparagine 951 are Cytoplasmic-facing. A Phosphoserine; by PKA modification is found at serine 943. A helical membrane pass occupies residues lysine 952–tyrosine 970. Topologically, residues cysteine 971 to proline 985 are extracellular. Residues threonine 986–lysine 1006 traverse the membrane as a helical segment. The Cytoplasmic segment spans residues leucine 1007–tyrosine 1023.

The protein belongs to the cation transport ATPase (P-type) (TC 3.A.3) family. Type IIC subfamily. In terms of assembly, the sodium/potassium-transporting ATPase is composed of a catalytic alpha subunit, an auxiliary non-catalytic beta subunit and an additional regulatory subunit. Interacts with regulatory subunit FXYD1. Interacts with regulatory subunit FXYD3. Interacts with SLC35G1 and STIM1. Interacts with SIK1. Interacts with CLN3; this interaction regulates the sodium/potassium-transporting ATPase complex localization at the plasma membrane. Interacts with SCN7A; activates ATP1A1 P-type sodium:potassium-exchanging transporter activity which indirectly signals to nearby neurons to regulate sodium homeostasis. In terms of processing, phosphorylation on Tyr-10 modulates pumping activity. Phosphorylation of Ser-943 by PKA modulates the response of ATP1A1 to PKC. Dephosphorylation by protein phosphatase 2A (PP2A) following increases in intracellular sodium, leading to increase catalytic activity. In terms of tissue distribution, expressed in the central nervous system, in most motor and sensory axons of the ventral and dorsal roots, as well as in the large motor neurons of the ventral horn (at protein level).

The protein resides in the cell membrane. The protein localises to the basolateral cell membrane. Its subcellular location is the sarcolemma. It is found in the cell projection. It localises to the axon. The protein resides in the melanosome. The enzyme catalyses K(+)(out) + Na(+)(in) + ATP + H2O = K(+)(in) + Na(+)(out) + ADP + phosphate + H(+). Functionally, this is the catalytic component of the active enzyme, which catalyzes the hydrolysis of ATP coupled with the exchange of sodium and potassium ions across the plasma membrane. This action creates the electrochemical gradient of sodium and potassium ions, providing the energy for active transport of various nutrients. Could also be part of an osmosensory signaling pathway that senses body-fluid sodium levels and controls salt intake behavior as well as voluntary water intake to regulate sodium homeostasis. The sequence is that of Sodium/potassium-transporting ATPase subunit alpha-1 (Atp1a1) from Rattus norvegicus (Rat).